The primary structure comprises 210 residues: Signal peptidase complex catalytic subunit SEC11 (210 aa).

The Cytoplasmic segment spans residues 1-21; sequence MLAGLSPHLSNLRRSLTQVLN. Residues 22-38 form a helical; Signal-anchor for type II membrane protein membrane-spanning segment; sequence FALVLSTAFMMWKGLSI. Residues 39-210 are Lumenal-facing; the sequence is YTNSSSPIVV…MGAMVILQRE (172 aa). N-linked (GlcNAc...) asparagine glycosylation occurs at Asn-41. Catalysis depends on charge relay system residues Ser-53, His-92, and Asp-152. A C-terminal short (CTS) helix region spans residues 196–207; it reads VLLGIMGAMVIL.

Belongs to the peptidase S26B family. Component of the signal peptidase complex (SPC) composed of a catalytic subunit SEC11 and three accessory subunits SPC1, SPC2 and SPC3. The complex induces a local thinning of the ER membrane which is used to measure the length of the signal peptide (SP) h-region of protein substrates. This ensures the selectivity of the complex towards h-regions shorter than 18-20 amino acids. SPC associates with the translocon complex.

The protein localises to the endoplasmic reticulum membrane. It catalyses the reaction Cleavage of hydrophobic, N-terminal signal or leader sequences from secreted and periplasmic proteins.. In terms of biological role, catalytic component of the signal peptidase complex (SPC) which catalyzes the cleavage of N-terminal signal sequences from nascent proteins as they are translocated into the lumen of the endoplasmic reticulum. Specifically cleaves N-terminal signal peptides that contain a hydrophobic alpha-helix (h-region) shorter than 18-20 amino acids. The polypeptide is Signal peptidase complex catalytic subunit SEC11 (SEC11) (Coccidioides posadasii (strain C735) (Valley fever fungus)).